We begin with the raw amino-acid sequence, 170 residues long: Xanthine-guanine phosphoribosyltransferase (170 aa).

5-phospho-alpha-D-ribose 1-diphosphate-binding positions include 41–42 (RG) and 98–106 (DDLTDTGKT). D99 contributes to the Mg(2+) binding site. Residue D102 participates in guanine binding. Residue D102 participates in xanthine binding. 102-106 (DTGKT) provides a ligand contact to GMP.

Belongs to the purine/pyrimidine phosphoribosyltransferase family. XGPT subfamily. In terms of assembly, homotetramer. Requires Mg(2+) as cofactor.

The protein resides in the cell inner membrane. The enzyme catalyses GMP + diphosphate = guanine + 5-phospho-alpha-D-ribose 1-diphosphate. It carries out the reaction XMP + diphosphate = xanthine + 5-phospho-alpha-D-ribose 1-diphosphate. The catalysed reaction is IMP + diphosphate = hypoxanthine + 5-phospho-alpha-D-ribose 1-diphosphate. The protein operates within purine metabolism; GMP biosynthesis via salvage pathway; GMP from guanine: step 1/1. Its pathway is purine metabolism; XMP biosynthesis via salvage pathway; XMP from xanthine: step 1/1. Functionally, purine salvage pathway enzyme that catalyzes the transfer of the ribosyl-5-phosphate group from 5-phospho-alpha-D-ribose 1-diphosphate (PRPP) to the N9 position of the 6-oxopurines guanine and xanthine to form the corresponding ribonucleotides GMP (guanosine 5'-monophosphate) and XMP (xanthosine 5'-monophosphate), with the release of PPi. To a lesser extent, also acts on hypoxanthine. The sequence is that of Xanthine-guanine phosphoribosyltransferase from Brucella abortus (strain 2308).